Consider the following 160-residue polypeptide: 6,7-dimethyl-8-ribityllumazine synthase (160 aa).

5-amino-6-(D-ribitylamino)uracil contacts are provided by residues Phe23, 61 to 63 (SFE), and 85 to 87 (AVI). Position 90–91 (90–91 (DT)) interacts with (2S)-2-hydroxy-3-oxobutyl phosphate. His93 functions as the Proton donor in the catalytic mechanism. Residue Phe118 participates in 5-amino-6-(D-ribitylamino)uracil binding. A (2S)-2-hydroxy-3-oxobutyl phosphate-binding site is contributed by Arg132.

It belongs to the DMRL synthase family.

It catalyses the reaction (2S)-2-hydroxy-3-oxobutyl phosphate + 5-amino-6-(D-ribitylamino)uracil = 6,7-dimethyl-8-(1-D-ribityl)lumazine + phosphate + 2 H2O + H(+). It participates in cofactor biosynthesis; riboflavin biosynthesis; riboflavin from 2-hydroxy-3-oxobutyl phosphate and 5-amino-6-(D-ribitylamino)uracil: step 1/2. Functionally, catalyzes the formation of 6,7-dimethyl-8-ribityllumazine by condensation of 5-amino-6-(D-ribitylamino)uracil with 3,4-dihydroxy-2-butanone 4-phosphate. This is the penultimate step in the biosynthesis of riboflavin. In Parasynechococcus marenigrum (strain WH8102), this protein is 6,7-dimethyl-8-ribityllumazine synthase.